Consider the following 163-residue polypeptide: Nucleotide-binding protein RBAM_011030 (163 aa).

It belongs to the YajQ family.

Nucleotide-binding protein. The sequence is that of Nucleotide-binding protein RBAM_011030 from Bacillus velezensis (strain DSM 23117 / BGSC 10A6 / LMG 26770 / FZB42) (Bacillus amyloliquefaciens subsp. plantarum).